Consider the following 312-residue polypeptide: Very-long-chain 3-oxoacyl-CoA reductase (312 aa).

A helical transmembrane segment spans residues 4 to 24; that stretch reads ALPAAGFLYWVGASTVAYLAL. Residue 50–79 coordinates NADP(+); sequence GEWAVVTGGTDGIGKSYAEELAKRGMKIVL. The next 2 helical transmembrane spans lie at 182–202 and 271–291; these read GAILNISSASGMYPVPLLTIY and GYPIHSLVASVSASLPSWLYF. A substrate-binding site is contributed by S189. The active-site Proton acceptor is Y202. A Di-lysine motif motif is present at residues 308 to 312; that stretch reads KMKMN.

The protein belongs to the short-chain dehydrogenases/reductases (SDR) family. 17-beta-HSD 3 subfamily.

It is found in the endoplasmic reticulum membrane. The enzyme catalyses a very-long-chain (3R)-3-hydroxyacyl-CoA + NADP(+) = a very-long-chain 3-oxoacyl-CoA + NADPH + H(+). The catalysed reaction is 17beta-estradiol + NAD(+) = estrone + NADH + H(+). It catalyses the reaction 17beta-estradiol + NADP(+) = estrone + NADPH + H(+). It carries out the reaction 3-oxooctadecanoyl-CoA + NADPH + H(+) = (3R)-hydroxyoctadecanoyl-CoA + NADP(+). The enzyme catalyses (7Z,10Z,13Z,16Z)-3-oxodocosatetraenoyl-CoA + NADPH + H(+) = (3R)-hydroxy-(7Z,10Z,13Z,16Z)-docosatetraenoyl-CoA + NADP(+). The catalysed reaction is 3-oxo-(7Z,10Z,13Z,16Z,19Z)-docosapentaenoyl-CoA + NADPH + H(+) = (3R)-hydroxy-(7Z,10Z,13Z,16Z,19Z)-docosapentaenoyl-CoA + NADP(+). It catalyses the reaction (8Z,11Z,14Z)-3-oxoeicosatrienoyl-CoA + NADPH + H(+) = (3R)-hydroxy-(8Z,11Z,14Z)-eicosatrienoyl-CoA + NADP(+). It participates in lipid metabolism; fatty acid biosynthesis. Its pathway is steroid biosynthesis; estrogen biosynthesis. Functionally, catalyzes the second of the four reactions of the long-chain fatty acids elongation cycle. This endoplasmic reticulum-bound enzymatic process, allows the addition of two carbons to the chain of long- and very long-chain fatty acids/VLCFAs per cycle. This enzyme has a 3-ketoacyl-CoA reductase activity, reducing 3-ketoacyl-CoA to 3-hydroxyacyl-CoA, within each cycle of fatty acid elongation. Thereby, it may participate in the production of VLCFAs of different chain lengths that are involved in multiple biological processes as precursors of membrane lipids and lipid mediators. May also catalyze the transformation of estrone (E1) into estradiol (E2) and play a role in estrogen formation. In Bos taurus (Bovine), this protein is Very-long-chain 3-oxoacyl-CoA reductase (HSD17B12).